A 121-amino-acid chain; its full sequence is Phosphoribosyl-ATP pyrophosphatase (121 aa).

Belongs to the PRA-PH family.

It is found in the cytoplasm. It carries out the reaction 1-(5-phospho-beta-D-ribosyl)-ATP + H2O = 1-(5-phospho-beta-D-ribosyl)-5'-AMP + diphosphate + H(+). Its pathway is amino-acid biosynthesis; L-histidine biosynthesis; L-histidine from 5-phospho-alpha-D-ribose 1-diphosphate: step 2/9. This chain is Phosphoribosyl-ATP pyrophosphatase, found in Burkholderia vietnamiensis (strain G4 / LMG 22486) (Burkholderia cepacia (strain R1808)).